A 1507-amino-acid polypeptide reads, in one-letter code: MSSSSEISVAGSDVSFEGRLTQHGRHEETPADQLTKILSGRSHEDADGDDAHSDNRSILSRSRRSSTAELSPEMVGRVQSLADVLSRHTSRSGGNIDLSQLSESDRFDAERIIGSFVRDADEQGIHLRKAGVTLEHVSARGADSTAMEGATFGNVLCLPYTIYKAIRDKSGSKMRTILNDVSGLARAGEMVLVLGRPGAGCSSMLKVTAGEIDQFAGGVEGEIMYDGIPQKEMMKRYKPDVIYNGEQDVHFPHLTVQQTLDFAIACKTPSKRVNDVSREEYIASTRDLHATIFGLRHTYHTKVGNDFVRGVSGGERKRVSIAEALVTKGSIYCWDNATRGLDASTALEYAKAIRITTNLLGSTAFVTIYQASENIYETFDKVTVLYTGRQIYFGPIDEAKDYFYRMGYECPPRQVTAEFLTALTDVNGYHKIRPGYENKVPRTAEEFERYWQESPEYRQLLIDIDQYKKEIDTEKTKEIYDQSMQQEKSKHARKKSYYTVSFWEQIRLCTKRGFQRIYGDKAYTVITICSAIIQSLVSGSLYYNTPSSTSGAFSRGGVLYFCLLYYSLMGLANLSFEHRPILQKHKIYSLYHPAAEALGSTIANFPFRMIGMTCFLIIIYFLSGLNRTASSFFRVYLFLTMCSESINALFELIAAGCDNISQANSISGIVMMSISLYSTYMIQLPSMRPWFKWISYILPIRYAFESMLLAEFHGRHMGCGGTLVPSGPGYENIASENQVCAFVGSKPGQSWVLGDDYLRLQFEYEYKHEWRNFGIMWCFLLGYIALKALITEIKRPVKGGGDALIFKKGTRKYHMKLDEEDGELHEIDTKEKFSSRSGSSTTSEDEIFEELESKGIFIWRNVCYTIPYDGGMRQLLDNVSGFCKPGTLTALMGESGAGKTTLLNTLAQRNVGIITGDMLVNGKPIDISFERRTGYVQQQDIHISELTVRESLQFSARMRRAQNVPEEEKMEHVERIIKVLDMEEYADALVGDVGRGLNVEQRKKLSIGVELVAKPDLLLFLDEPTSGLDSQSSWAIVQLLKKLAKAGQSILCTIHQPSATLFEEFDRLLLLKKGGQTVYFGDIGDNSKTLLSYFERNGARKCSPSENPAEYILEAIGAGATASVTEDWHQIWKNSDEFISTEKEVDHLIDQLSNQKTESEFGDAPTKYATSYAYQFKWVLIRTSMSLWRNLDYIMSKMMLMTVGGLYIGFTFYDPGDSYTGLQNTLFAAFISIILSAPAMNQIQARAIAARELFEVRESKSNMFHWSLLLITQYLSEIPYHFLFSAIFFVSSYFPLRTHFQASASAVYYLNYSIMFQLYYIGFGLCVLYMAPNLQSANVILGLCLSFLIAFCGVVQPVSLMPGFWTFMWKTSPYTYFVQNMVGILLHNKPVICRKKELSIFDPPAGQTCQEFTQAFLDKRGGYIANPNATTACEYCIYEVGDDYLKHISASYSYLWRNFGLYWAYIGFNICAMVAIYYIFHVRGVSFKFDRVFKLFSRITRRGKKSN.

Residues 1-73 (MSSSSEISVA…RSSTAELSPE (73 aa)) are disordered. Positions 41-55 (RSHEDADGDDAHSDN) are enriched in basic and acidic residues. N-linked (GlcNAc...) asparagine glycans are attached at residues Asn55 and Asn336. The ABC transporter 1 domain occupies 157–412 (CLPYTIYKAI…FYRMGYECPP (256 aa)). 3 helical membrane-spanning segments follow: residues 522–542 (AYTV…GSLY), 556–576 (GGVL…NLSF), and 605–625 (FPFR…LSGL). The N-linked (GlcNAc...) asparagine glycan is linked to Asn626. The chain crosses the membrane as a helical span at residues 635–655 (VYLFLTMCSESINALFELIAA). A glycan (N-linked (GlcNAc...) asparagine) is linked at Asn659. 2 consecutive transmembrane segments (helical) span residues 665–685 (SISG…IQLP) and 773–793 (FGIM…ITEI). An ABC transporter 2 domain is found at 857–1099 (FIWRNVCYTI…LLSYFERNGA (243 aa)). Asn878 is a glycosylation site (N-linked (GlcNAc...) asparagine). Residue 893–900 (GESGAGKT) coordinates ATP. The next 3 helical transmembrane spans lie at 1193-1213 (YIMS…FTFY), 1220-1240 (TGLQ…APAM), and 1270-1290 (LITQ…IFFV). Asn1311 is a glycosylation site (N-linked (GlcNAc...) asparagine). A run of 2 helical transmembrane segments spans residues 1314–1334 (IMFQ…APNL) and 1339–1359 (VILG…QPVS). A glycan (N-linked (GlcNAc...) asparagine) is linked at Asn1428. Residues 1459–1479 (FGLYWAYIGFNICAMVAIYYI) traverse the membrane as a helical segment.

The protein belongs to the ABC transporter superfamily. ABCG family. PDR (TC 3.A.1.205) subfamily.

The protein resides in the cell membrane. In terms of biological role, ABC multidrug transporter involved in the response to azoles such as fluconazole, itraconazole, ketoconazole and voriconazole and contributes to the development of PDR1-dependent azole resistance. Plays a role in biofilm tolerance to fluconazole. Also confers resistance to 4-nitroquinoline-N-oxide (4-NQO). This chain is ABC multidrug transporter SNQ2, found in Candida glabrata (strain ATCC 2001 / BCRC 20586 / JCM 3761 / NBRC 0622 / NRRL Y-65 / CBS 138) (Yeast).